The chain runs to 251 residues: Phosphoribosylaminoimidazole-succinocarboxamide synthase (251 aa).

Belongs to the SAICAR synthetase family.

It carries out the reaction 5-amino-1-(5-phospho-D-ribosyl)imidazole-4-carboxylate + L-aspartate + ATP = (2S)-2-[5-amino-1-(5-phospho-beta-D-ribosyl)imidazole-4-carboxamido]succinate + ADP + phosphate + 2 H(+). The protein operates within purine metabolism; IMP biosynthesis via de novo pathway; 5-amino-1-(5-phospho-D-ribosyl)imidazole-4-carboxamide from 5-amino-1-(5-phospho-D-ribosyl)imidazole-4-carboxylate: step 1/2. The polypeptide is Phosphoribosylaminoimidazole-succinocarboxamide synthase (Phenylobacterium zucineum (strain HLK1)).